We begin with the raw amino-acid sequence, 469 residues long: Cysteine--tRNA ligase (469 aa).

C29 serves as a coordination point for Zn(2+). The 'HIGH' region signature appears at 31–41 (PTVYNYIHIGN). Positions 210, 235, and 239 each coordinate Zn(2+). The 'KMSKS' region signature appears at 267–271 (KMSKS). Residue K270 coordinates ATP.

Belongs to the class-I aminoacyl-tRNA synthetase family. Monomer. It depends on Zn(2+) as a cofactor.

It is found in the cytoplasm. It carries out the reaction tRNA(Cys) + L-cysteine + ATP = L-cysteinyl-tRNA(Cys) + AMP + diphosphate. The protein is Cysteine--tRNA ligase of Thermosipho africanus (strain TCF52B).